The sequence spans 184 residues: Probable RNA 2'-phosphotransferase (184 aa).

It belongs to the KptA/TPT1 family.

Functionally, removes the 2'-phosphate from RNA via an intermediate in which the phosphate is ADP-ribosylated by NAD followed by a presumed transesterification to release the RNA and generate ADP-ribose 1''-2''-cyclic phosphate (APPR&gt;P). May function as an ADP-ribosylase. The chain is Probable RNA 2'-phosphotransferase from Escherichia coli (strain 55989 / EAEC).